Consider the following 344-residue polypeptide: MSEVLTVDAVLFGLLVFSGIIGNIMVIYVVFDCAKLCASRHLPPSDTILVHLCLANLLTSVFRTVPIFVSDLGLQVWLTAGWCRVFMLLWVWWRAVGCWVTLALSAFHCATLRRQHVSMGPLGHSRERRRVWVVLAVVWAANLLFSLPALVYTTQVRGNATVELMVISCTTRPLLGCVWEFPTFQQGYAFASSSLALNEVLPLVLMVGTNLATLQALGKHIRTVRAGGSTGAELDRHVSSERKAGHVIMALVALFVGCWVLQVAAVTYYNHNRGAHAEGLLTVAHFSASLFVGFSPLVVALGHGKLRRRISGILQSCMHRLKQTQDKPAEITEKDGRTTQSAMK.

The Extracellular portion of the chain corresponds to 1–10 (MSEVLTVDAV). Residues 11 to 31 (LFGLLVFSGIIGNIMVIYVVF) traverse the membrane as a helical segment. Over 32 to 47 (DCAKLCASRHLPPSDT) the chain is Cytoplasmic. The chain crosses the membrane as a helical span at residues 48–68 (ILVHLCLANLLTSVFRTVPIF). The Extracellular portion of the chain corresponds to 69 to 84 (VSDLGLQVWLTAGWCR). A disulfide bond links Cys-83 and Cys-169. The chain crosses the membrane as a helical span at residues 85–105 (VFMLLWVWWRAVGCWVTLALS). Over 106–130 (AFHCATLRRQHVSMGPLGHSRERRR) the chain is Cytoplasmic. A helical membrane pass occupies residues 131–151 (VWVVLAVVWAANLLFSLPALV). Residues 152 to 186 (YTTQVRGNATVELMVISCTTRPLLGCVWEFPTFQQ) are Extracellular-facing. An N-linked (GlcNAc...) asparagine glycan is attached at Asn-159. The helical transmembrane segment at 187–207 (GYAFASSSLALNEVLPLVLMV) threads the bilayer. Topologically, residues 208 to 246 (GTNLATLQALGKHIRTVRAGGSTGAELDRHVSSERKAGH) are cytoplasmic. A helical membrane pass occupies residues 247-267 (VIMALVALFVGCWVLQVAAVT). The Extracellular portion of the chain corresponds to 268–279 (YYNHNRGAHAEG). Residues 280 to 300 (LLTVAHFSASLFVGFSPLVVA) traverse the membrane as a helical segment. Topologically, residues 301–344 (LGHGKLRRRISGILQSCMHRLKQTQDKPAEITEKDGRTTQSAMK) are cytoplasmic. A compositionally biased stretch (basic and acidic residues) spans 324–337 (TQDKPAEITEKDGR). A disordered region spans residues 324 to 344 (TQDKPAEITEKDGRTTQSAMK).

It belongs to the G-protein coupled receptor 1 family. Highly expressed in the olfactory rosette. Specifically localizes to crypt neurons in the olfactory neuroepithelium. Colocalizes with the inhibitory G-protein gnaia in crypt neurons. Not detected in other tissues tested.

It localises to the cell membrane. In terms of biological role, probable olfactory receptor. The sequence is that of Olfactory receptor class A-like protein 4 (ora4) from Danio rerio (Zebrafish).